Reading from the N-terminus, the 129-residue chain is Ropporin-1 (129 aa).

Residues 11-34 (PELPELLKTQPPDLIQWAAEYFGA) enclose the RIIa domain.

The protein belongs to the ropporin family. As to quaternary structure, homodimer. Interacts with AKAP3. May interact with SPA17. Interacts with RHPN1. Interacts with FSCB; the interaction increases upon spermatozoa capacitation conditions. Interacts with CFAP61. Post-translationally, sumoylated, sumoylation decreases upon spermatozoa capacitation conditions.

It localises to the cell projection. It is found in the cilium. The protein resides in the flagellum. Functionally, important for male fertility. With ROPN1L, involved in fibrous sheath integrity and sperm motility, plays a role in PKA-dependent signaling processes required for spermatozoa capacitation. This Mesocricetus auratus (Golden hamster) protein is Ropporin-1.